The primary structure comprises 189 residues: Putative manganese efflux pump MntP (189 aa).

6 consecutive transmembrane segments (helical) span residues 3-23 (IVSTLLLALAMSADAFAAAVS), 41-61 (MIFGVIEATTPLVGWSLGRVA), 62-82 (ADYVTAWDHWIAFSILAFLGI), 103-123 (SFILLAMTALGTSIDAMSVGV), 132-152 (IVPVAFAIGIVTCIMVSAGVM), and 167-187 (IIGGLILIGIGSLILYKHLYG).

The protein belongs to the MntP (TC 9.B.29) family.

It is found in the cell inner membrane. In terms of biological role, probably functions as a manganese efflux pump. In Methylobacillus flagellatus (strain ATCC 51484 / DSM 6875 / VKM B-1610 / KT), this protein is Putative manganese efflux pump MntP.